Reading from the N-terminus, the 432-residue chain is PC-esterase domain-containing protein 1B (432 aa).

Disordered stretches follow at residues 273–312 and 407–432; these read WESS…SPGL and GPYM…SRPQ. Over residues 285 to 294 the composition is skewed to polar residues; it reads QDNIGPQFAQ. Residues 296–312 are compositionally biased toward pro residues; the sequence is PPYPFPRPPPLLPSPGL.

Belongs to the PC-esterase family.

The polypeptide is PC-esterase domain-containing protein 1B (Pced1b) (Rattus norvegicus (Rat)).